The sequence spans 58 residues: MSPQTETKASVGFKAGVKDYKLTYYTPDYETKDTDILAAFRVSPQPGVPPEEAGAAVA.

The propeptide occupies 1 to 2; that stretch reads MS. Proline 3 carries the N-acetylproline modification. An N6,N6,N6-trimethyllysine modification is found at lysine 14.

This sequence belongs to the RuBisCO large chain family. Type I subfamily. In terms of assembly, heterohexadecamer of 8 large chains and 8 small chains.

It localises to the plastid. Its subcellular location is the chloroplast. The enzyme catalyses 2 (2R)-3-phosphoglycerate + 2 H(+) = D-ribulose 1,5-bisphosphate + CO2 + H2O. It carries out the reaction D-ribulose 1,5-bisphosphate + O2 = 2-phosphoglycolate + (2R)-3-phosphoglycerate + 2 H(+). In terms of biological role, ruBisCO catalyzes two reactions: the carboxylation of D-ribulose 1,5-bisphosphate, the primary event in carbon dioxide fixation, as well as the oxidative fragmentation of the pentose substrate in the photorespiration process. Both reactions occur simultaneously and in competition at the same active site. The protein is Ribulose bisphosphate carboxylase large chain (rbcL) of Weinmannia silvicola (Towai).